The sequence spans 199 residues: Putative 3-methyladenine DNA glycosylase (199 aa).

This sequence belongs to the DNA glycosylase MPG family.

This chain is Putative 3-methyladenine DNA glycosylase, found in Rhizobium etli (strain ATCC 51251 / DSM 11541 / JCM 21823 / NBRC 15573 / CFN 42).